Here is a 552-residue protein sequence, read N- to C-terminus: Dihydroxy-acid dehydratase (552 aa).

Asp78 contacts Mg(2+). Residue Cys119 participates in [2Fe-2S] cluster binding. 2 residues coordinate Mg(2+): Asp120 and Lys121. Position 121 is an N6-carboxylysine (Lys121). Cys191 serves as a coordination point for [2Fe-2S] cluster. Glu442 provides a ligand contact to Mg(2+). Ser468 functions as the Proton acceptor in the catalytic mechanism.

Belongs to the IlvD/Edd family. In terms of assembly, homodimer. It depends on [2Fe-2S] cluster as a cofactor. Mg(2+) is required as a cofactor.

It catalyses the reaction (2R)-2,3-dihydroxy-3-methylbutanoate = 3-methyl-2-oxobutanoate + H2O. The enzyme catalyses (2R,3R)-2,3-dihydroxy-3-methylpentanoate = (S)-3-methyl-2-oxopentanoate + H2O. Its pathway is amino-acid biosynthesis; L-isoleucine biosynthesis; L-isoleucine from 2-oxobutanoate: step 3/4. It participates in amino-acid biosynthesis; L-valine biosynthesis; L-valine from pyruvate: step 3/4. Functionally, functions in the biosynthesis of branched-chain amino acids. Catalyzes the dehydration of (2R,3R)-2,3-dihydroxy-3-methylpentanoate (2,3-dihydroxy-3-methylvalerate) into 2-oxo-3-methylpentanoate (2-oxo-3-methylvalerate) and of (2R)-2,3-dihydroxy-3-methylbutanoate (2,3-dihydroxyisovalerate) into 2-oxo-3-methylbutanoate (2-oxoisovalerate), the penultimate precursor to L-isoleucine and L-valine, respectively. The sequence is that of Dihydroxy-acid dehydratase from Clostridium botulinum (strain Alaska E43 / Type E3).